Here is a 205-residue protein sequence, read N- to C-terminus: Small ribosomal subunit protein uS4 (205 aa).

Over residues 1–16 (MSKRESSKYKIDRRMG) the composition is skewed to basic and acidic residues. The interval 1-46 (MSKRESSKYKIDRRMGENIWGRPKSPVNRREYGPGQHGQRRKGKLS) is disordered. The 64-residue stretch at 94 to 157 (SRLDAIVYRA…KQLVIVLEAV (64 aa)) folds into the S4 RNA-binding domain.

This sequence belongs to the universal ribosomal protein uS4 family. Part of the 30S ribosomal subunit. Contacts protein S5. The interaction surface between S4 and S5 is involved in control of translational fidelity.

In terms of biological role, one of the primary rRNA binding proteins, it binds directly to 16S rRNA where it nucleates assembly of the body of the 30S subunit. With S5 and S12 plays an important role in translational accuracy. The sequence is that of Small ribosomal subunit protein uS4 from Rhizobium leguminosarum bv. trifolii (strain WSM2304).